Consider the following 351-residue polypeptide: Autoinducer 2 import system permease protein LsrC (351 aa).

A run of 9 helical transmembrane segments spans residues L14–L34, M39–L59, I70–A90, L93–L113, I115–L135, I155–W175, M213–P233, G252–L272, and L284–D304.

The protein belongs to the binding-protein-dependent transport system permease family. AraH/RbsC subfamily. As to quaternary structure, the complex is composed of two ATP-binding proteins (LsrA), two transmembrane proteins (LsrC and LsrD) and a solute-binding protein (LsrB).

Its subcellular location is the cell inner membrane. In terms of biological role, part of the ABC transporter complex LsrABCD involved in autoinducer 2 (AI-2) import. Probably responsible for the translocation of the substrate across the membrane. In Yersinia pseudotuberculosis serotype O:1b (strain IP 31758), this protein is Autoinducer 2 import system permease protein LsrC (lsrC).